We begin with the raw amino-acid sequence, 27 residues long: Delta-conotoxin TxVIB (27 aa).

3 cysteine pairs are disulfide-bonded: Cys2/Cys17, Cys9/Cys21, and Cys16/Cys26.

The protein belongs to the conotoxin O1 superfamily. As to expression, expressed by the venom duct.

It localises to the secreted. Delta-conotoxins bind to site 6 of voltage-gated sodium channels (Nav) and inhibit the inactivation process. Induces membrane depolarization and spontaneous repetitive firing of neurons. This is Delta-conotoxin TxVIB from Conus textile (Cloth-of-gold cone).